The chain runs to 543 residues: MLLRSKPALPPPLMLLLLGPLGPLSPGALPRPAQAQDVVDLDFFTQEPLHLVSPSFLSVTIDANLATDPRFLILLGSPKLRTLARGLSPAYLRFGGTKTDFLIFDPKKESTFEERSYWQSQVNQDICKYGSIPPDVEEKLRLEWPYQEQLLLREHYQKKFKNSTYSRSSVDVLYTFANCSGLDLIFGLNALLRTADLQWNSSNAQLLLDYCSSKGYNISWELGNEPNSFLKKADIFINGSQLGEDFIQLHKLLRKSTFKNAKLYGPDVGQPRRKTAKMLKSFLKAGGEVIDSVTWHHYYLNGRTATKEDFLNPDVLDIFISSVQKVFQVVESTRPGKKVWLGETSSAYGGGAPLLSDTFAAGFMWLDKLGLSARMGIEVVMRQVFFGAGNYHLVDENFDPLPDYWLSLLFKKLVGTKVLMASVQGSKRRKLRVYLHCTNTDNPRYKEGDLTLYAINLHNVTKYLRLPYPFSNKQVDKYLLRPLGPHGLLSKSVQLNGLTLKMVDDQTLPPLMEKPLRPGSSLGLPAFSYSFFVIRNAKVAACI.

The signal sequence occupies residues 1–35 (MLLRSKPALPPPLMLLLLGPLGPLSPGALPRPAQA). Residues 62-64 (DAN) and threonine 97 contribute to the heparan sulfate group site. Positions 110-157 (STFEERSYWQSQVNQDICKYGSIPPDVEEKLRLEWPYQEQLLLREHYQ) are cleaved as a propeptide — linker peptide. Cysteines 127 and 179 form a disulfide. 158-162 (KKFKN) lines the heparan sulfate group pocket. Asparagine 162, asparagine 178, asparagine 200, and asparagine 217 each carry an N-linked (GlcNAc...) asparagine glycan. Glutamate 225 serves as the catalytic Proton donor. Asparagine 238 is a glycosylation site (N-linked (GlcNAc...) asparagine). Residues 270-280 (QPRRKTAKMLK), histidine 296, and arginine 303 contribute to the heparan sulfate group site. Residues 288-417 (EVIDSVTWHH…LLFKKLVGTK (130 aa)) are required for heterodimerization with the heparanase 8 kDa subunit. Residue glutamate 343 is the Nucleophile of the active site. Heparan sulfate group contacts are provided by residues 348–350 (YGG) and 389–391 (GNY). A disulfide bridge links cysteine 437 with cysteine 542. Residue asparagine 459 is glycosylated (N-linked (GlcNAc...) asparagine). A required for transferring proheparanase to the Golgi apparatus, secretion and subsequent enzyme activity and for enhancement of PKB/AKT1 phosphorylation region spans residues 527–543 (FSYSFFVIRNAKVAACI).

Belongs to the glycosyl hydrolase 79 family. In terms of assembly, heterodimer; heterodimer formation between the 8 kDa and the 50 kDa subunits is required for enzyme activity. Interacts with TF; the interaction, inhibited by heparin, enhances the generation of activated factor X and activates coagulation. Interacts with HRG; the interaction is enhanced at acidic pH, partially inhibits binding of HPSE to cell surface receptors and modulates its enzymatic activity. Interacts with SDC1; the interaction enhances the shedding of SDC1. Interacts with HPSE2. Post-translationally, proteolytically processed. The cleavage of the 65 kDa form leads to the generation of a linker peptide, and 8 kDa and 50 kDa products. The active form, the 8/50 kDa heterodimer, is resistant to degradation. Complete removal of the linker peptide appears to be a prerequisite to the complete activation of the enzyme. N-glycosylated. Glycosylation of the 50 kDa subunit appears to be essential for its solubility. Highly expressed in placenta and spleen and weakly expressed in lymph node, thymus, peripheral blood leukocytes, bone marrow, endothelial cells, fetal liver and tumor tissues. Also expressed in hair follicles, specifically in both Henle's and Huxley's layers of inner the root sheath (IRS) at anagen phase.

Its subcellular location is the lysosome membrane. The protein resides in the secreted. The protein localises to the nucleus. The catalysed reaction is endohydrolysis of (1-&gt;4)-beta-D-glycosidic bonds of heparan sulfate chains in heparan sulfate proteoglycan.. Its activity is regulated as follows. Inhibited by EDTA, laminarin sulfate and, to a lower extent, by heparin and sulfamin and activated by calcium and magnesium. Endoglycosidase that cleaves heparan sulfate proteoglycans (HSPGs) into heparan sulfate side chains and core proteoglycans. Participates in extracellular matrix (ECM) degradation and remodeling. Selectively cleaves the linkage between a glucuronic acid unit and an N-sulfo glucosamine unit carrying either a 3-O-sulfo or a 6-O-sulfo group. Can also cleave the linkage between a glucuronic acid unit and an N-sulfo glucosamine unit carrying a 2-O-sulfo group, but not linkages between a glucuronic acid unit and a 2-O-sulfated iduronic acid moiety. It is essentially inactive at neutral pH but becomes active under acidic conditions such as during tumor invasion and in inflammatory processes. Facilitates cell migration associated with metastasis, wound healing and inflammation. Enhances shedding of syndecans, and increases endothelial invasion and angiogenesis in myelomas. Acts as a procoagulant by increasing the generation of activation factor X in the presence of tissue factor and activation factor VII. Increases cell adhesion to the extracellular matrix (ECM), independent of its enzymatic activity. Induces AKT1/PKB phosphorylation via lipid rafts increasing cell mobility and invasion. Heparin increases this AKT1/PKB activation. Regulates osteogenesis. Enhances angiogenesis through up-regulation of SRC-mediated activation of VEGF. Implicated in hair follicle inner root sheath differentiation and hair homeostasis. The polypeptide is Heparanase (HPSE) (Homo sapiens (Human)).